A 295-amino-acid chain; its full sequence is UDP-N-acetylenolpyruvoylglucosamine reductase (295 aa).

The FAD-binding PCMH-type domain occupies 23–188; it reads KVGGPADFLA…ISAKFALKPG (166 aa). Arg-167 is an active-site residue. Ser-217 serves as the catalytic Proton donor. Residue Glu-287 is part of the active site.

Belongs to the MurB family. FAD serves as cofactor.

The protein localises to the cytoplasm. It carries out the reaction UDP-N-acetyl-alpha-D-muramate + NADP(+) = UDP-N-acetyl-3-O-(1-carboxyvinyl)-alpha-D-glucosamine + NADPH + H(+). It participates in cell wall biogenesis; peptidoglycan biosynthesis. Cell wall formation. In Streptococcus pyogenes serotype M1, this protein is UDP-N-acetylenolpyruvoylglucosamine reductase.